Here is a 331-residue protein sequence, read N- to C-terminus: Glycerol-3-phosphate dehydrogenase [NAD(P)+] (331 aa).

NADPH-binding residues include serine 11, phenylalanine 12, arginine 32, and lysine 106. The sn-glycerol 3-phosphate site is built by lysine 106, glycine 134, and serine 136. Residue alanine 138 participates in NADPH binding. Positions 189, 242, 252, 253, and 254 each coordinate sn-glycerol 3-phosphate. The active-site Proton acceptor is lysine 189. Residue arginine 253 participates in NADPH binding. The NADPH site is built by valine 277 and glutamate 279.

Belongs to the NAD-dependent glycerol-3-phosphate dehydrogenase family.

It is found in the cytoplasm. The enzyme catalyses sn-glycerol 3-phosphate + NAD(+) = dihydroxyacetone phosphate + NADH + H(+). The catalysed reaction is sn-glycerol 3-phosphate + NADP(+) = dihydroxyacetone phosphate + NADPH + H(+). It functions in the pathway membrane lipid metabolism; glycerophospholipid metabolism. Its function is as follows. Catalyzes the reduction of the glycolytic intermediate dihydroxyacetone phosphate (DHAP) to sn-glycerol 3-phosphate (G3P), the key precursor for phospholipid synthesis. The polypeptide is Glycerol-3-phosphate dehydrogenase [NAD(P)+] (Clostridium perfringens (strain ATCC 13124 / DSM 756 / JCM 1290 / NCIMB 6125 / NCTC 8237 / Type A)).